A 1132-amino-acid polypeptide reads, in one-letter code: Phosphatidylinositide phosphatase SAC2 (1132 aa).

The SAC domain occupies 167–518 (LKMFMDSESF…GDSISRQYAG (352 aa)). The region spanning 593-760 (RSHQELISQL…KSSKPHEDII (168 aa)) is the hSac2 domain. 2 positions are modified to phosphoserine: S827 and S830. The tract at residues 846-875 (ESDGDMSSDNDSYHSDEFLTNSKSDEDRQL) is disordered. Over residues 856–874 (DSYHSDEFLTNSKSDEDRQ) the composition is skewed to basic and acidic residues. Phosphoserine is present on residues S878, S881, S907, and S910. Disordered regions lie at residues 923–942 (VAHG…KSPS) and 974–1017 (LSET…LDVS). S1103 carries the phosphoserine modification.

In terms of assembly, homodimer. Interacts with OCRL and RAB5A. Interacts with INPP5B and INPP4A. Interacts with STAT3; the interaction is independent of STAT3 'Tyr-705' phosphorylation status. As to expression, ubiquitous. Highly expressed in brain.

Its subcellular location is the membrane. It is found in the clathrin-coated pit. It localises to the early endosome. The protein localises to the recycling endosome. The enzyme catalyses a myo-inositol phosphate + H2O = myo-inositol + phosphate. In terms of biological role, inositol 4-phosphatase which mainly acts on phosphatidylinositol 4-phosphate. May be functionally linked to OCRL, which converts phosphatidylinositol 4,5-bisphosphate to phosphatidylinositol, for a sequential dephosphorylation of phosphatidylinositol 4,5-bisphosphate at the 5 and 4 position of inositol, thus playing an important role in the endocytic recycling. Regulator of TF:TFRC and integrins recycling pathway, is also involved in cell migration mechanisms. Modulates AKT/GSK3B pathway by decreasing AKT and GSK3B phosphorylation. Negatively regulates STAT3 signaling pathway through inhibition of STAT3 phosphorylation and translocation to the nucleus. Functionally important modulator of cardiac myocyte size and of the cardiac response to stress. May play a role as negative regulator of axon regeneration after central nervous system injuries. This is Phosphatidylinositide phosphatase SAC2 from Homo sapiens (Human).